The sequence spans 172 residues: Small ribosomal subunit protein uS5 (172 aa).

The region spanning 17–80 is the S5 DRBM domain; that stretch reads LREKMISVNR…EQARRNMFKV (64 aa).

It belongs to the universal ribosomal protein uS5 family. In terms of assembly, part of the 30S ribosomal subunit. Contacts proteins S4 and S8.

With S4 and S12 plays an important role in translational accuracy. In terms of biological role, located at the back of the 30S subunit body where it stabilizes the conformation of the head with respect to the body. This Burkholderia orbicola (strain AU 1054) protein is Small ribosomal subunit protein uS5.